We begin with the raw amino-acid sequence, 477 residues long: Bifunctional protein HldE (477 aa).

The segment at 1–318 (MKVTLPEFER…ENAVRGRADT (318 aa)) is ribokinase. Lys-179 is subject to N6-acetyllysine. 195-198 (NLSE) lines the ATP pocket. Residue Asp-264 is part of the active site. The cytidylyltransferase stretch occupies residues 344–477 (MTNGVFDILH…IKKIQQDKKG (134 aa)).

This sequence in the N-terminal section; belongs to the carbohydrate kinase PfkB family. In the C-terminal section; belongs to the cytidylyltransferase family. In terms of assembly, homodimer.

The enzyme catalyses D-glycero-beta-D-manno-heptose 7-phosphate + ATP = D-glycero-beta-D-manno-heptose 1,7-bisphosphate + ADP + H(+). The catalysed reaction is D-glycero-beta-D-manno-heptose 1-phosphate + ATP + H(+) = ADP-D-glycero-beta-D-manno-heptose + diphosphate. Its pathway is nucleotide-sugar biosynthesis; ADP-L-glycero-beta-D-manno-heptose biosynthesis; ADP-L-glycero-beta-D-manno-heptose from D-glycero-beta-D-manno-heptose 7-phosphate: step 1/4. It functions in the pathway nucleotide-sugar biosynthesis; ADP-L-glycero-beta-D-manno-heptose biosynthesis; ADP-L-glycero-beta-D-manno-heptose from D-glycero-beta-D-manno-heptose 7-phosphate: step 3/4. Functionally, catalyzes the phosphorylation of D-glycero-D-manno-heptose 7-phosphate at the C-1 position to selectively form D-glycero-beta-D-manno-heptose-1,7-bisphosphate. In terms of biological role, catalyzes the ADP transfer from ATP to D-glycero-beta-D-manno-heptose 1-phosphate, yielding ADP-D-glycero-beta-D-manno-heptose. The protein is Bifunctional protein HldE of Escherichia fergusonii (strain ATCC 35469 / DSM 13698 / CCUG 18766 / IAM 14443 / JCM 21226 / LMG 7866 / NBRC 102419 / NCTC 12128 / CDC 0568-73).